Reading from the N-terminus, the 647-residue chain is MIKITFPDGAVREFESGVTTFDIAESISKSLAKKALAGKFNDQLIDTTRAIEEDGSIEIVTPDHKDAYEVLRHSAAHLFAQAAKRLFPNLHLGVGPAIAEGFYYDTDNAEGQISNEDLPRIEAEMQKIVTENYPCIREEVTKEEALELFKDDPYKVELINEHAGAGLTVYRQGEFVDLCRGPHVPSTGRIQVFHLLNVAGAYWRGNSDNNMMQRIYGTAWFDKKDLKAYLTRLEEAKERDHRKLGKELDLFMISQEVGQGLPFWLPDGATIRRTLERYITDKELASGYQHVYTPPLASVELYKTSGHWDHYQEDMFPVMDMGDGEEFVLRPMNCPHHIQVYKNHVRSYRELPIRIAELGMMHRYEKSGALSGLQRVREMTLNDGHIFVTPEQIQEEFQRALQLIIDVYADFNLTDYRFRLSYRDPNDTHKYYDNDEMWENAQSMLKAALDEMGVDYFEAEGEAAFYGPKLDIQVKTALGNEETLSTIQLDFLLPERFDLKYIGADGEEHRPVMIHRGVISTMERFTAILIETYKGAFPTWLAPHQVTVIPISNEAHIDYAWEVAKILRDRGVRADVDDRNEKMQYKIRASQTSKIPYQLIVGDKEMEDKSVNVRRYGSKATHTESVEDFVENILADIARKSRPDAQA.

Residues 1–61 form the TGS domain; sequence MIKITFPDGA…EEDGSIEIVT (61 aa). A catalytic region spans residues 240–538; the sequence is DHRKLGKELD…LIETYKGAFP (299 aa). Positions 334, 385, and 515 each coordinate Zn(2+).

This sequence belongs to the class-II aminoacyl-tRNA synthetase family. In terms of assembly, homodimer. Requires Zn(2+) as cofactor.

The protein resides in the cytoplasm. It catalyses the reaction tRNA(Thr) + L-threonine + ATP = L-threonyl-tRNA(Thr) + AMP + diphosphate + H(+). Functionally, catalyzes the attachment of threonine to tRNA(Thr) in a two-step reaction: L-threonine is first activated by ATP to form Thr-AMP and then transferred to the acceptor end of tRNA(Thr). Also edits incorrectly charged L-seryl-tRNA(Thr). This chain is Threonine--tRNA ligase, found in Streptococcus pyogenes serotype M49 (strain NZ131).